Here is a 625-residue protein sequence, read N- to C-terminus: Alpha-protein kinase vwkA (625 aa).

Residues Met1–Thr15 are compositionally biased toward basic and acidic residues. A disordered region spans residues Met1–His64. Polar residues-rich tracts occupy residues Asp25–Gly39 and Ser46–Thr63. The stretch at Thr87–Ala114 forms a coiled coil. A VWFA domain is found at Asp122–Ile322. In terms of domain architecture, Alpha-type protein kinase spans Thr386–Pro600. Gly570–Lys576 contributes to the ATP binding site. A disordered region spans residues Phe602–Tyr625.

This sequence belongs to the protein kinase superfamily. Alpha-type protein kinase family. ALPK subfamily. As to quaternary structure, interacts with calmodulin; in the presence of calcium. Post-translationally, autophosphorylated, in vitro.

The protein localises to the cytoplasm. It is found in the cytosol. It localises to the perinuclear region. Its subcellular location is the contractile vacuole membrane. The catalysed reaction is L-seryl-[protein] + ATP = O-phospho-L-seryl-[protein] + ADP + H(+). It catalyses the reaction L-threonyl-[protein] + ATP = O-phospho-L-threonyl-[protein] + ADP + H(+). Its activity is regulated as follows. Autophosphorylation activity enhanced by calcium/calmodulin. Its function is as follows. Displays a modest preference for threonine over serine residues. Does not phosphorylate myosin II, however can phosphorylate MBP, in vitro. May be involved in the regulation of myosin II function during cytokinesis. Overexpression leads to impaired cell proliferation in suspension culture and fails to develop beyond the mound stage. Both overexpression and absence of the gene can result in defects in cytokinesis and alterations in myosin II abundance and assembly. The chain is Alpha-protein kinase vwkA (vwkA) from Dictyostelium discoideum (Social amoeba).